Consider the following 86-residue polypeptide: Small ribosomal subunit protein uS15c (86 aa).

This sequence belongs to the universal ribosomal protein uS15 family. Part of the 30S ribosomal subunit.

It localises to the plastid. Its subcellular location is the chloroplast. The sequence is that of Small ribosomal subunit protein uS15c (rps15) from Cryptomeria japonica (Japanese cedar).